The chain runs to 614 residues: UvrABC system protein C (614 aa).

Residues 26-104 (NLPGVYKMLG…IKEYRPPYNV (79 aa)) enclose the GIY-YIG domain. A UVR domain is found at 215–250 (SDIHTALIEKMEASAEELDFEKAVFYRDQLSMLREV).

Belongs to the UvrC family. In terms of assembly, interacts with UvrB in an incision complex.

It localises to the cytoplasm. Functionally, the UvrABC repair system catalyzes the recognition and processing of DNA lesions. UvrC both incises the 5' and 3' sides of the lesion. The N-terminal half is responsible for the 3' incision and the C-terminal half is responsible for the 5' incision. This chain is UvrABC system protein C, found in Psychrobacter cryohalolentis (strain ATCC BAA-1226 / DSM 17306 / VKM B-2378 / K5).